Consider the following 255-residue polypeptide: F-box/SPRY domain-containing protein 1 (255 aa).

In terms of domain architecture, F-box spans 3–51 (DPVAALCNYNVLEVIFSYLELEDLSHCSQVCKSWYHFLNDENSDVWRWH). The 193-residue stretch at 61-253 (LKSDLLSSVS…VSMVYLGTPL (193 aa)) folds into the B30.2/SPRY domain.

The protein belongs to the FBXO45/Fsn family. In terms of assembly, component of an E3 ubiquitin ligase complex composed of hiw and Fsn.

Its subcellular location is the synapse. It functions in the pathway protein modification; protein ubiquitination. Functionally, required in the presynaptic motoneuron to down-regulate the levels of wnd and restrain synaptic terminal growth at the neuromuscular junction (NMJ). The sequence is that of F-box/SPRY domain-containing protein 1 from Drosophila erecta (Fruit fly).